A 240-amino-acid polypeptide reads, in one-letter code: Protein MGARP (240 aa).

Over 1–45 the chain is Cytoplasmic; the sequence is MYLRRAVSKTLALPLRAPPGPAPLRKDASLRWISSNKFPGSSGSN. The helical; Anchor for type IV membrane protein transmembrane segment at 46-64 threads the bilayer; sequence MIYYLVVGVTVSAGGYYTY. The Mitochondrial intermembrane portion of the chain corresponds to 65 to 240; sequence KRVTSGKAKR…AGSEAASAQG (176 aa). The tract at residues 72-240 is disordered; the sequence is AKRSDHVTDL…AGSEAASAQG (169 aa). The segment covering 73–87 has biased composition (basic and acidic residues); it reads KRSDHVTDLKEKTKA. Composition is skewed to low complexity over residues 166–183 and 228–240; these read TVET…VTST and EACA…SAQG.

In terms of assembly, interacts with RHOT1/Miro-1, RHOT2/Miro-2, TRAK1/OIP106 and TRAK2/GRIF1.

It localises to the mitochondrion. The protein resides in the mitochondrion outer membrane. The protein localises to the mitochondrion inner membrane. Its function is as follows. Plays a role in the trafficking of mitochondria along microtubules. Regulates the kinesin-mediated axonal transport of mitochondria to nerve terminals along microtubules during hypoxia. Participates in the translocation of TRAK2/GRIF1 from the cytoplasm to the mitochondrion. Also plays a role in steroidogenesis through maintenance of mitochondrial abundance and morphology. Plays an inhibitory role during neocortex development by regulating mitochondrial morphology, distribution and motility in neocortical neurons. In Bos taurus (Bovine), this protein is Protein MGARP (MGARP).